A 245-amino-acid polypeptide reads, in one-letter code: MEGPRGWLVLCVLAISLASMVTEDLCRAPDGKKGEAGRPGRRGRPGLKGEQGEPGAPGIRTGIQGLKGDQGEPGPSGNPGKVGYPGPSGPLGARGIPGIKGTKGSPGNIKDQPRPAFSAIRRNPPMGGNVVIFDTVITNQEEPYQNHSGRFVCTVPGYYYFTFQVLSQWEICLSIVSSSRGQVRRSLGFCDTTNKGLFQVVSGGMVLQLQQGDQVWVEKDPKKGHIYQGSEADSVFSGFLIFPSA.

An N-terminal signal peptide occupies residues 1-22 (MEGPRGWLVLCVLAISLASMVT). Over residues 27-38 (RAPDGKKGEAGR) the composition is skewed to basic and acidic residues. The tract at residues 27 to 114 (RAPDGKKGEA…SPGNIKDQPR (88 aa)) is disordered. One can recognise a Collagen-like domain in the interval 31 to 109 (GKKGEAGRPG…KGTKGSPGNI (79 aa)). A 5-hydroxylysine modification is found at lysine 33. O-linked (Gal...) hydroxylysine glycosylation is present at lysine 33. Proline 39 and proline 45 each carry 4-hydroxyproline. At lysine 48 the chain carries 5-hydroxylysine. O-linked (Gal...) hydroxylysine glycosylation occurs at lysine 48. Residues proline 54 and proline 57 each carry the 4-hydroxyproline modification. Lysine 67 is subject to 5-hydroxylysine. Residue lysine 67 is glycosylated (O-linked (Gal...) hydroxylysine). 4-hydroxyproline is present on residues proline 73, proline 79, and proline 85. Residue lysine 100 is modified to 5-hydroxylysine. Lysine 100 is a glycosylation site (O-linked (Gal...) hydroxylysine). The 136-residue stretch at 110 to 245 (KDQPRPAFSA…FSGFLIFPSA (136 aa)) folds into the C1q domain. Asparagine 146 carries an N-linked (GlcNAc...) asparagine glycan. Cysteine 172 and cysteine 190 form a disulfide bridge. Glutamine 199 lines the Ca(2+) pocket.

As to quaternary structure, core component of the complement C1 complex, a calcium-dependent complex composed of 1 molecule of the C1Q subcomplex, 2 molecules of C1R and 2 molecules of C1S. The C1Q subcomplex is composed 18 subunits: 3 chains of C1QA, C1QB, and C1QC trimerize to form 6 collagen-like triple helices connected to six globular ligand-recognition modules (C1q domain). Interacts with CR1 (via Sushi 24 and Sushi 25 domains). Interacts (via C-terminus) with CD33; this interaction activates CD33 inhibitory motifs. (Microbial infection) Interacts with Staphylococcus aureus protein Cna; this interaction results in the inhibition of the classical complement pathway. Post-translationally, O-linked glycans are assumed to be the Glc-Gal disaccharides typically found as secondary modifications of hydroxylated lysines in collagen-like domains.

It is found in the secreted. It localises to the cell surface. The C1Q subcomplex is inhibited by sulfated molecules, such as triterpenoid sulfates, heparan sulfate, or chondroitin sulfates. In terms of biological role, core component of the complement C1 complex, a multiprotein complex that initiates the classical pathway of the complement system, a cascade of proteins that leads to phagocytosis and breakdown of pathogens and signaling that strengthens the adaptive immune system. The classical complement pathway is initiated by the C1Q subcomplex of the C1 complex, which specifically binds IgG or IgM immunoglobulins complexed with antigens, forming antigen-antibody complexes on the surface of pathogens: C1QA, together with C1QB and C1QC, specifically recognizes and binds the Fc regions of IgG or IgM via its C1q domain. Immunoglobulin-binding activates the proenzyme C1R, which cleaves C1S, initiating the proteolytic cascade of the complement system. The C1Q subcomplex is activated by a hexamer of IgG complexed with antigens, while it is activated by a pentameric IgM. The C1Q subcomplex also recognizes and binds phosphatidylserine exposed on the surface of cells undergoing programmed cell death, possibly promoting activation of the complement system. The protein is Complement C1q subcomponent subunit A of Homo sapiens (Human).